The sequence spans 250 residues: Small ribosomal subunit protein uS2 (250 aa).

This sequence belongs to the universal ribosomal protein uS2 family.

The chain is Small ribosomal subunit protein uS2 from Marinobacter nauticus (strain ATCC 700491 / DSM 11845 / VT8) (Marinobacter aquaeolei).